A 207-amino-acid polypeptide reads, in one-letter code: Large ribosomal subunit protein uL4 (207 aa).

Residues Ala-50–Gly-76 form a disordered region.

The protein belongs to the universal ribosomal protein uL4 family. In terms of assembly, part of the 50S ribosomal subunit.

One of the primary rRNA binding proteins, this protein initially binds near the 5'-end of the 23S rRNA. It is important during the early stages of 50S assembly. It makes multiple contacts with different domains of the 23S rRNA in the assembled 50S subunit and ribosome. Functionally, forms part of the polypeptide exit tunnel. The chain is Large ribosomal subunit protein uL4 from Staphylococcus aureus (strain JH9).